We begin with the raw amino-acid sequence, 185 residues long: Translocon-associated protein subunit gamma (185 aa).

Methionine 1 carries the N-acetylmethionine modification. Residues 1–27 (MAPKGGSKQQSEEDLLLQDFSRNLSAK) are Lumenal-facing. Serine 7 and serine 11 each carry phosphoserine. A helical transmembrane segment spans residues 28–48 (SSALFFGNAFIVSAIPIWLYW). At 49–54 (RIWHMD) the chain is on the cytoplasmic side. A helical transmembrane segment spans residues 55-76 (LIQSAVLYSVMTLVSTYLVAFA). Topologically, residues 77-135 (YKNVKFVLKHKVAQKREDAVSKEVTRKLSEADNRKMSRKEKDERILWKKNEVADYEATT) are lumenal. Serine 105 carries the post-translational modification Phosphoserine. A helical membrane pass occupies residues 136 to 157 (FSIFYNNTLFLVLVIVASFFIL). Over 158–163 (KNFNPT) the chain is Cytoplasmic. The helical transmembrane segment at 164-184 (VNYILSISASSGLIALLSTGS) threads the bilayer.

This sequence belongs to the TRAP-gamma family. Heterotetramer of TRAP-alpha, TRAP-beta, TRAP-delta and TRAP-gamma.

It is found in the endoplasmic reticulum membrane. TRAP proteins are part of a complex whose function is to bind calcium to the ER membrane and thereby regulate the retention of ER resident proteins. The sequence is that of Translocon-associated protein subunit gamma (Ssr3) from Mus musculus (Mouse).